The following is a 335-amino-acid chain: N-acetyl-gamma-glutamyl-phosphate reductase (335 aa).

The active site involves Cys-147.

This sequence belongs to the NAGSA dehydrogenase family. Type 1 subfamily.

It is found in the cytoplasm. It carries out the reaction N-acetyl-L-glutamate 5-semialdehyde + phosphate + NADP(+) = N-acetyl-L-glutamyl 5-phosphate + NADPH + H(+). It functions in the pathway amino-acid biosynthesis; L-arginine biosynthesis; N(2)-acetyl-L-ornithine from L-glutamate: step 3/4. Functionally, catalyzes the NADPH-dependent reduction of N-acetyl-5-glutamyl phosphate to yield N-acetyl-L-glutamate 5-semialdehyde. The chain is N-acetyl-gamma-glutamyl-phosphate reductase from Sulfurovum sp. (strain NBC37-1).